The sequence spans 240 residues: T-cell antigen CD7 (240 aa).

The N-terminal stretch at 1–25 (MAGPPRLLLLPLLLALARGLPGALA) is a signal peptide. An Ig-like domain is found at 26–130 (AQEVQQSPHC…NVYGSGTLVL (105 aa)). The Extracellular portion of the chain corresponds to 26 to 180 (AQEVQQSPHC…PDPPAASALP (155 aa)). Cystine bridges form between cysteine 35/cysteine 142 and cysteine 48/cysteine 114. N-linked (GlcNAc...) asparagine glycosylation is found at asparagine 45 and asparagine 96. The interval 140 to 172 (HRCSDAPPRASALPAPPTGSALPDPQTASALPD) is disordered. A run of 4 repeats spans residues 145-153 (APPRASALP), 154-162 (APPTGSALP), 163-171 (DPQTASALP), and 172-180 (DPPAASALP). The segment at 145–180 (APPRASALPAPPTGSALPDPQTASALPDPPAASALP) is 4 X 9 AA tandem repeats, potential spacer function. The chain crosses the membrane as a helical span at residues 181-201 (AALAVISFLLGLGLGVACVLA). Residue cysteine 198 is the site of S-palmitoyl cysteine attachment. Over 202–240 (RTQIKKLCSWRDKNSAACVVYEDMSHSRCNTLSSPNQYQ) the chain is Cytoplasmic.

In terms of assembly, interacts with SECTM1. As to expression, expressed on T-cells and natural killer (NK) cells and their precursors.

It is found in the membrane. In terms of biological role, transmembrane glycoprotein expressed by T-cells and natural killer (NK) cells and their precursors. Plays a costimulatory role in T-cell activation upon binding to its ligand K12/SECTM1. In turn, mediates the production of cytokines such as IL-2. On resting NK-cells, CD7 activation results in a significant induction of interferon-gamma levels. The chain is T-cell antigen CD7 (CD7) from Homo sapiens (Human).